The primary structure comprises 474 residues: Probable glycine dehydrogenase (decarboxylating) subunit 2 (474 aa).

Lysine 262 bears the N6-(pyridoxal phosphate)lysine mark.

The protein belongs to the GcvP family. C-terminal subunit subfamily. The glycine cleavage system is composed of four proteins: P, T, L and H. In this organism, the P 'protein' is a heterodimer of two subunits. Pyridoxal 5'-phosphate is required as a cofactor.

The catalysed reaction is N(6)-[(R)-lipoyl]-L-lysyl-[glycine-cleavage complex H protein] + glycine + H(+) = N(6)-[(R)-S(8)-aminomethyldihydrolipoyl]-L-lysyl-[glycine-cleavage complex H protein] + CO2. The glycine cleavage system catalyzes the degradation of glycine. The P protein binds the alpha-amino group of glycine through its pyridoxal phosphate cofactor; CO(2) is released and the remaining methylamine moiety is then transferred to the lipoamide cofactor of the H protein. The sequence is that of Probable glycine dehydrogenase (decarboxylating) subunit 2 from Thermotoga maritima (strain ATCC 43589 / DSM 3109 / JCM 10099 / NBRC 100826 / MSB8).